A 387-amino-acid chain; its full sequence is Chaperone protein DnaJ (387 aa).

The region spanning 6–70 (DYYETLGVSR…QKRAAYDQYG (65 aa)) is the J domain. The CR-type zinc finger occupies 143 to 225 (GKDTKISYDR…CHGTGHEQER (83 aa)). Residues Cys-156, Cys-159, Cys-173, Cys-176, Cys-199, Cys-202, Cys-213, and Cys-216 each contribute to the Zn(2+) site. CXXCXGXG motif repeat units follow at residues 156–163 (CHTCNGSG), 173–180 (CHKCHGSG), 199–206 (CDVCGGTG), and 213–220 (CPTCHGTG).

This sequence belongs to the DnaJ family. In terms of assembly, homodimer. Zn(2+) serves as cofactor.

It localises to the cytoplasm. Functionally, participates actively in the response to hyperosmotic and heat shock by preventing the aggregation of stress-denatured proteins and by disaggregating proteins, also in an autonomous, DnaK-independent fashion. Unfolded proteins bind initially to DnaJ; upon interaction with the DnaJ-bound protein, DnaK hydrolyzes its bound ATP, resulting in the formation of a stable complex. GrpE releases ADP from DnaK; ATP binding to DnaK triggers the release of the substrate protein, thus completing the reaction cycle. Several rounds of ATP-dependent interactions between DnaJ, DnaK and GrpE are required for fully efficient folding. Also involved, together with DnaK and GrpE, in the DNA replication of plasmids through activation of initiation proteins. This Lacticaseibacillus paracasei (strain ATCC 334 / BCRC 17002 / CCUG 31169 / CIP 107868 / KCTC 3260 / NRRL B-441) (Lactobacillus paracasei) protein is Chaperone protein DnaJ.